Reading from the N-terminus, the 344-residue chain is Anthranilate phosphoribosyltransferase (344 aa).

5-phospho-alpha-D-ribose 1-diphosphate-binding positions include G84, 87 to 88, T92, 94 to 97, 112 to 120, and S124; these read GD, NIST, and KHGNRSVSS. G84 serves as a coordination point for anthranilate. S96 serves as a coordination point for Mg(2+). An anthranilate-binding site is contributed by N115. R170 is a binding site for anthranilate. D229 and E230 together coordinate Mg(2+).

Belongs to the anthranilate phosphoribosyltransferase family. Homodimer. Mg(2+) serves as cofactor.

It carries out the reaction N-(5-phospho-beta-D-ribosyl)anthranilate + diphosphate = 5-phospho-alpha-D-ribose 1-diphosphate + anthranilate. It participates in amino-acid biosynthesis; L-tryptophan biosynthesis; L-tryptophan from chorismate: step 2/5. Its function is as follows. Catalyzes the transfer of the phosphoribosyl group of 5-phosphorylribose-1-pyrophosphate (PRPP) to anthranilate to yield N-(5'-phosphoribosyl)-anthranilate (PRA). The chain is Anthranilate phosphoribosyltransferase from Xylella fastidiosa (strain M23).